A 509-amino-acid polypeptide reads, in one-letter code: Putative thymidine phosphorylase (509 aa).

Belongs to the thymidine/pyrimidine-nucleoside phosphorylase family. Type 2 subfamily.

It carries out the reaction thymidine + phosphate = 2-deoxy-alpha-D-ribose 1-phosphate + thymine. The sequence is that of Putative thymidine phosphorylase from Bradyrhizobium sp. (strain ORS 278).